A 279-amino-acid polypeptide reads, in one-letter code: Putative methyltransferase Jann_4284 (279 aa).

This Jannaschia sp. (strain CCS1) protein is Putative methyltransferase Jann_4284.